The following is a 495-amino-acid chain: MERWWFNSMLFKKEFERRCGLNKSMGSLGPIENTNEDPNRKVKNIHSWRNRDNSSCSNVDYLFGVKDIRNFISDDTFLVSDRNGDSYSIYFDIENHIFEIDNDHSFLSELESSFYSYRNSNYRNNGFRGEDPYYNSYMYDTQYSWNNHINSCIDSYLQSQICIDTSIISGSENYGDSYIYRAVCGGESRNSSENEGSSRRTRTKGSDLTIRESSNDLEVTQKYRHLWVQCENCYGLNYKKFLKSKMNICEQCGYHLKMSSSDRIELLIDPGTWDPMDEDMVSLDPIEFHSEEEPYKDRIDSYQRKTGLTEAVQTGIGQLNGIPVAIGVMDFQFMGGSMGSVVGEKITRLIEYAANQILPLIIVCASGGARMQEGSLSLMQMAKISSALYDYQLNKKLFYVSILTSPTTGGVTASFGMLGDIIIAEPNAYIAFAGKRVIEQTLNKTVPEGSQAAEYLFQKGLFDLIVPRNLLKSVLSELFKLHAFFPLNQKSSKIK.

Residues 187–208 are disordered; that stretch reads ESRNSSENEGSSRRTRTKGSDL. The 270-residue stretch at 226–495 folds into the CoA carboxyltransferase N-terminal domain; sequence LWVQCENCYG…PLNQKSSKIK (270 aa). Cys230, Cys233, Cys249, and Cys252 together coordinate Zn(2+). The C4-type zinc-finger motif lies at 230–252; sequence CENCYGLNYKKFLKSKMNICEQC.

This sequence belongs to the AccD/PCCB family. As to quaternary structure, acetyl-CoA carboxylase is a heterohexamer composed of biotin carboxyl carrier protein, biotin carboxylase and 2 subunits each of ACCase subunit alpha and ACCase plastid-coded subunit beta (accD). Requires Zn(2+) as cofactor. RNA expressed in leaf, root and stem; the least expression occurs in stems.

It is found in the plastid. The protein localises to the chloroplast stroma. It catalyses the reaction N(6)-carboxybiotinyl-L-lysyl-[protein] + acetyl-CoA = N(6)-biotinyl-L-lysyl-[protein] + malonyl-CoA. It functions in the pathway lipid metabolism; malonyl-CoA biosynthesis; malonyl-CoA from acetyl-CoA: step 1/1. Component of the acetyl coenzyme A carboxylase (ACC) complex. Biotin carboxylase (BC) catalyzes the carboxylation of biotin on its carrier protein (BCCP) and then the CO(2) group is transferred by the transcarboxylase to acetyl-CoA to form malonyl-CoA. This Nicotiana tabacum (Common tobacco) protein is Acetyl-coenzyme A carboxylase carboxyl transferase subunit beta, chloroplastic.